The following is a 78-amino-acid chain: D-alanyl carrier protein (78 aa).

In terms of domain architecture, Carrier spans Met-1 to Lys-78. Residue Ser-36 is modified to O-(pantetheine 4'-phosphoryl)serine.

It belongs to the DltC family. Post-translationally, 4'-phosphopantetheine is transferred from CoA to a specific serine of apo-DCP.

It localises to the cytoplasm. It functions in the pathway cell wall biogenesis; lipoteichoic acid biosynthesis. Carrier protein involved in the D-alanylation of lipoteichoic acid (LTA). The loading of thioester-linked D-alanine onto DltC is catalyzed by D-alanine--D-alanyl carrier protein ligase DltA. The DltC-carried D-alanyl group is further transferred to cell membrane phosphatidylglycerol (PG) by forming an ester bond, probably catalyzed by DltD. D-alanylation of LTA plays an important role in modulating the properties of the cell wall in Gram-positive bacteria, influencing the net charge of the cell wall. The polypeptide is D-alanyl carrier protein (Bacillus subtilis (strain 168)).